A 216-amino-acid polypeptide reads, in one-letter code: Phosphoenolpyruvate guanylyltransferase (216 aa).

Thr150, Gly165, and Ser168 together coordinate phosphoenolpyruvate.

The protein belongs to the CofC family.

It carries out the reaction phosphoenolpyruvate + GTP + H(+) = enolpyruvoyl-2-diphospho-5'-guanosine + diphosphate. It functions in the pathway cofactor biosynthesis; coenzyme F420 biosynthesis. Its function is as follows. Guanylyltransferase that catalyzes the activation of phosphoenolpyruvate (PEP) as enolpyruvoyl-2-diphospho-5'-guanosine, via the condensation of PEP with GTP. It is involved in the biosynthesis of coenzyme F420, a hydride carrier cofactor. In Mycobacterium leprae (strain Br4923), this protein is Phosphoenolpyruvate guanylyltransferase.